The primary structure comprises 402 residues: MAQDRKKVLVLGAGYAGLQTVTKLQKAISTEEAEITLINKNEYHYEATWLHEASAGTLNYEDVLYPVESVLKKDKVNFVQAEVTKIDRDAKKVETNQGIYDFDILVVALGFVSETFGIEGMKDHAFQIENVITARELSRHIEDKFANYAASKEKDDNDLSILVGGAGFTGVEFLGELTDRIPELCSKYGVDQNKVKITCVEAAPKMLPMFSEELVNHAVSYLEDRGVEFKIATPIVACNEKGFVVEVDGEKQQLNAGTSVWAAGVRGSKLMEESFEGVKRGRIVTKQDLTINGYDNIFVIGDCSAFIPAGEERPLPTTAQIAMQQGESVAKNIKRILNGESTEEFEYVDRGTVCSLGSHDGVGMVFGKPIAGKKAAFMKKVIDTRAVFKIGGIGLAFKKGKF.

Residues Gly12–Ala16, Asn39–Lys40, and Val83 contribute to the FAD site. Residue Glu172 is part of the active site. Residues Asp302, Ala319–Gln320, and Lys379 contribute to the FAD site.

It belongs to the NADH dehydrogenase family. As to quaternary structure, homodimer in solution. Forms homotetramers; dimer of dimers. Requires FAD as cofactor.

Its subcellular location is the cell membrane. The catalysed reaction is a quinone + NADH + H(+) = a quinol + NAD(+). It catalyses the reaction a menaquinone + NADH + H(+) = a menaquinol + NAD(+). It carries out the reaction a ubiquinone + NADH + H(+) = a ubiquinol + NAD(+). With respect to regulation, inhibited by HQNO, a quinone derivative. Its function is as follows. Alternative, nonproton pumping NADH:quinone oxidoreductase that delivers electrons to the respiratory chain by oxidation of NADH and reduction of quinones, and contributes to the regeneration of NAD(+). Can use DMN, a menaquinone analog, 2,3-dimethoxy-5,6-dimethyl-benzoquinone (DDB), an ubiquinone analog, or 2,3,5,6-tetramethyl-1,4-benzoquinone (Duroquinone, DQ) a plastoquinone analog as electron acceptors. This Staphylococcus aureus (strain NCTC 8325 / PS 47) protein is Type II NADH:quinone oxidoreductase.